A 426-amino-acid chain; its full sequence is Enolase (426 aa).

Residue Q163 participates in (2R)-2-phosphoglycerate binding. E205 serves as the catalytic Proton donor. Mg(2+) contacts are provided by D242, E285, and D312. 4 residues coordinate (2R)-2-phosphoglycerate: K337, R366, S367, and K388. K337 (proton acceptor) is an active-site residue.

It belongs to the enolase family. Mg(2+) is required as a cofactor.

It localises to the cytoplasm. It is found in the secreted. The protein resides in the cell surface. It catalyses the reaction (2R)-2-phosphoglycerate = phosphoenolpyruvate + H2O. It functions in the pathway carbohydrate degradation; glycolysis; pyruvate from D-glyceraldehyde 3-phosphate: step 4/5. Catalyzes the reversible conversion of 2-phosphoglycerate (2-PG) into phosphoenolpyruvate (PEP). It is essential for the degradation of carbohydrates via glycolysis. The chain is Enolase from Caulobacter vibrioides (strain ATCC 19089 / CIP 103742 / CB 15) (Caulobacter crescentus).